The following is a 178-amino-acid chain: CASP-like protein 2A2 (178 aa).

Residues 1–22 lie on the Cytoplasmic side of the membrane; sequence MDKTDQTAIDESALVLNRTEKS. Residues 23 to 43 traverse the membrane as a helical segment; the sequence is AEAVLRVASMALSITGLVIMI. The Extracellular segment spans residues 44–69; the sequence is KNSISNEFGSVSYSNIGAFMYLVSAN. A helical transmembrane segment spans residues 70–90; that stretch reads GVCAAYSLLSALAILALPCPI. The Cytoplasmic segment spans residues 91-96; the sequence is SKVQVR. Residues 97 to 117 form a helical membrane-spanning segment; it reads TLFLLDQVVTYVVLAAGAVSA. Topologically, residues 118 to 145 are extracellular; that stretch reads ETVYLAYYGNIPITWSSACDSYGSFCHN. The chain crosses the membrane as a helical span at residues 146 to 166; the sequence is ALISVVFTFVVSLLYMLLSLI. Over 167–178 the chain is Cytoplasmic; that stretch reads SSYRLFTRFEAP.

The protein belongs to the Casparian strip membrane proteins (CASP) family. Homodimer and heterodimers. Mostly expressed in flowers and buds and, to a lower extent, in roots and yellow siliques. Localized in the floral organ abscission zone.

The protein resides in the cell membrane. Functionally, involved in floral organ shedding. This is CASP-like protein 2A2 from Arabidopsis thaliana (Mouse-ear cress).